We begin with the raw amino-acid sequence, 44 residues long: MRYVASYLLAALGGNSSPSAKDIKKILDSVGIEADDDRLNKVIS.

An N-acetylmethionine modification is found at M1. S17 and S19 each carry phosphoserine. Position 21 is an N6-acetyllysine; alternate (K21). K21 is subject to N6-succinyllysine; alternate.

This sequence belongs to the eukaryotic ribosomal protein P1/P2 family. Heterodimer with RPLP1 at the lateral ribosomal stalk of the large ribosomal subunit. Post-translationally, phosphorylated.

Its function is as follows. Plays an important role in the elongation step of protein synthesis. This is Large ribosomal subunit protein P2 (RPLP2) from Oryctolagus cuniculus (Rabbit).